The primary structure comprises 421 residues: Enolase (421 aa).

A (2R)-2-phosphoglycerate-binding site is contributed by Gln-165. Catalysis depends on Glu-207, which acts as the Proton donor. Asp-244, Glu-285, and Asp-312 together coordinate Mg(2+). 4 residues coordinate (2R)-2-phosphoglycerate: Lys-337, Arg-366, Ser-367, and Lys-388. Lys-337 functions as the Proton acceptor in the catalytic mechanism.

It belongs to the enolase family. Mg(2+) serves as cofactor.

It is found in the cytoplasm. Its subcellular location is the secreted. The protein resides in the cell surface. The enzyme catalyses (2R)-2-phosphoglycerate = phosphoenolpyruvate + H2O. It participates in carbohydrate degradation; glycolysis; pyruvate from D-glyceraldehyde 3-phosphate: step 4/5. In terms of biological role, catalyzes the reversible conversion of 2-phosphoglycerate (2-PG) into phosphoenolpyruvate (PEP). It is essential for the degradation of carbohydrates via glycolysis. The protein is Enolase of Ehrlichia chaffeensis (strain ATCC CRL-10679 / Arkansas).